Consider the following 423-residue polypeptide: Lysosomal acid phosphatase (423 aa).

The N-terminal stretch at 1–30 (MAGRRFGWSRAALLQLILGVNLMVMPRTQA) is a signal peptide. The Lumenal segment spans residues 31-380 (RTLRFVTLLY…QLAGGPADTE (350 aa)). His-42 (nucleophile) is an active-site residue. Residues Asn-92, Asn-133, Asn-167, Asn-177, Asn-191, and Asn-267 are each glycosylated (N-linked (GlcNAc...) asparagine). Intrachain disulfides connect Cys-159–Cys-370, Cys-212–Cys-310, and Cys-345–Cys-349. The active-site Proton donor is Asp-287. N-linked (GlcNAc...) asparagine glycans are attached at residues Asn-322 and Asn-331. A helical transmembrane segment spans residues 381–401 (VIVALAVCGSILFLLIVLLLT). The Cytoplasmic segment spans residues 402 to 423 (VLFRVQAQPPGYRHVPDGEDHA).

It belongs to the histidine acid phosphatase family. The membrane-bound form is converted to the soluble form by sequential proteolytic processing. First, the C-terminal cytoplasmic tail is removed. Cleavage by a lysosomal protease releases the soluble form in the lysosome lumen.

The protein resides in the lysosome membrane. Its subcellular location is the lysosome lumen. It catalyses the reaction a phosphate monoester + H2O = an alcohol + phosphate. The polypeptide is Lysosomal acid phosphatase (ACP2) (Bos taurus (Bovine)).